Here is a 285-residue protein sequence, read N- to C-terminus: Sulfur carrier protein TtuD (285 aa).

Rhodanese domains lie at 20 to 127 and 161 to 281; these read EDPK…PLTT and KEGK…VPIA. Residue cysteine 240 is modified to Cysteine persulfide.

Cys-240 can accept a sulfur atom as persulfide forms from cysteine desulfurases IscS and SufS.

It participates in tRNA modification. Its function is as follows. Required for the efficient 2-thiolation of 5-methyluridine residue at position 54 in the T loop of tRNAs, leading to 5-methyl-2-thiouridine (m(5)s(2)U or s(2)T). TtuD is a sulfur carrier protein that has a role to direct sulfur flow from cysteine desulfurases to m(5)s(2)U synthesis in vivo. It enhances the cysteine desulfurase activity of IscS and SufS, as well as the formation of thiocarboxylated TtuB (TtuB-COSH) in the presence of these desulfurases. This Thermus thermophilus (strain ATCC BAA-163 / DSM 7039 / HB27) protein is Sulfur carrier protein TtuD.